Reading from the N-terminus, the 361-residue chain is MSSLPEAKLDILLARHAALENELLSQISAERYVQMTRELSELNPVVEAVKNWRAVKTEIAGIDAMIADPATDAEMRAMAEAERPALGARGDELAQKIRVALLPKDAMDERNVMLEIRAGTGGDEASLFAGDLFRMYERFAGLQGWKVEAISASEGTMGGYKEIVAEVRGRGAYAKLKFESGVHRVQRVPDTETQGRVHTSAATVAVLPEAEEVDVDIKTDDLRIETMRAQGAGGQHVNKTESAIRITHIPTGIVVMMQDSRSQHKNRASAMNILRSRIYDAERQRINAARSADRKDQVGSGDRSERIRTYNFPQGRVTDHRINLTLYKLPQVIAGDALHELIDALTTEHQAAQLATEGGGA.

Gln-235 carries the post-translational modification N5-methylglutamine. Residues 288–307 (AARSADRKDQVGSGDRSERI) are disordered.

Belongs to the prokaryotic/mitochondrial release factor family. Methylated by PrmC. Methylation increases the termination efficiency of RF1.

The protein localises to the cytoplasm. In terms of biological role, peptide chain release factor 1 directs the termination of translation in response to the peptide chain termination codons UAG and UAA. The chain is Peptide chain release factor 1 from Nitrobacter hamburgensis (strain DSM 10229 / NCIMB 13809 / X14).